We begin with the raw amino-acid sequence, 232 residues long: Cytidylate kinase (232 aa).

Position 19 to 27 (19 to 27 (GPAGVGKTT)) interacts with ATP.

It belongs to the cytidylate kinase family. Type 1 subfamily.

The protein localises to the cytoplasm. The catalysed reaction is CMP + ATP = CDP + ADP. It carries out the reaction dCMP + ATP = dCDP + ADP. The protein is Cytidylate kinase of Nitratidesulfovibrio vulgaris (strain DP4) (Desulfovibrio vulgaris).